The primary structure comprises 77 residues: Small ribosomal subunit protein bS18 (77 aa).

Belongs to the bacterial ribosomal protein bS18 family. In terms of assembly, part of the 30S ribosomal subunit. Forms a tight heterodimer with protein bS6.

Binds as a heterodimer with protein bS6 to the central domain of the 16S rRNA, where it helps stabilize the platform of the 30S subunit. The protein is Small ribosomal subunit protein bS18 of Bacillus cereus (strain ATCC 10987 / NRS 248).